A 328-amino-acid chain; its full sequence is MATSFFRRLARSAPITFPVAFGSQSKSGSGAFRFSTGAIAALSGGFSYYYLTSGNNLVYLDQAKEETGPKTALNPDKWLEFKLQDTARVSHNTQLFRFSFDPSAELGLHVASCLLTRAPLGYNAEGKTKYVIRPYTPISDPEAKGYFDLLIKVYPDGKMSQHFASLKPGDVLEVKGPVEKFKYSPNMKKHIGMIAGGSGITPMLQVIDAIVKNPEDNTQISLLYANVSPDDILLKQKLDVLQANHPNLKIFYTVDNPTKNWKGGVGYISKDMALKGLPLPTDDTLILVCGPPGMMEHISGGKAPDWSQGEVKGILKELGYTEEMVFKF.

The FAD-binding FR-type domain occupies 76–184 (DKWLEFKLQD…KGPVEKFKYS (109 aa)). A Phosphothreonine modification is found at threonine 201.

Belongs to the flavoprotein pyridine nucleotide cytochrome reductase family. FAD serves as cofactor.

It is found in the mitochondrion. The enzyme catalyses 2 Fe(III)-[cytochrome b5] + NADH = 2 Fe(II)-[cytochrome b5] + NAD(+) + H(+). In terms of biological role, desaturation and elongation of fatty acids. This Arabidopsis thaliana (Mouse-ear cress) protein is NADH-cytochrome b5 reductase-like protein (CBR2).